A 179-amino-acid chain; its full sequence is Segregation and condensation protein B (179 aa).

This sequence belongs to the ScpB family. As to quaternary structure, homodimer. Homodimerization may be required to stabilize the binding of ScpA to the Smc head domains. Component of a cohesin-like complex composed of ScpA, ScpB and the Smc homodimer, in which ScpA and ScpB bind to the head domain of Smc. The presence of the three proteins is required for the association of the complex with DNA.

The protein localises to the cytoplasm. In terms of biological role, participates in chromosomal partition during cell division. May act via the formation of a condensin-like complex containing Smc and ScpA that pull DNA away from mid-cell into both cell halves. The protein is Segregation and condensation protein B of Streptococcus equi subsp. zooepidemicus (strain H70).